The chain runs to 94 residues: Large ribosomal subunit protein bL25 (94 aa).

This sequence belongs to the bacterial ribosomal protein bL25 family. As to quaternary structure, part of the 50S ribosomal subunit; part of the 5S rRNA/L5/L18/L25 subcomplex. Contacts the 5S rRNA. Binds to the 5S rRNA independently of L5 and L18.

In terms of biological role, this is one of the proteins that binds to the 5S RNA in the ribosome where it forms part of the central protuberance. The sequence is that of Large ribosomal subunit protein bL25 from Shigella boydii serotype 18 (strain CDC 3083-94 / BS512).